A 400-amino-acid polypeptide reads, in one-letter code: Phosphoglycerate kinase (400 aa).

Residues 21-23, arginine 37, 60-63, arginine 121, and arginine 154 each bind substrate; these read DFN and HLGR. ATP is bound by residues lysine 204, glutamate 326, and 355-358; that span reads GGDS.

This sequence belongs to the phosphoglycerate kinase family. As to quaternary structure, monomer.

Its subcellular location is the cytoplasm. It catalyses the reaction (2R)-3-phosphoglycerate + ATP = (2R)-3-phospho-glyceroyl phosphate + ADP. It participates in carbohydrate degradation; glycolysis; pyruvate from D-glyceraldehyde 3-phosphate: step 2/5. The protein is Phosphoglycerate kinase of Chloroflexus aggregans (strain MD-66 / DSM 9485).